The sequence spans 561 residues: Carboxylesterase 1F (561 aa).

Positions 1 to 17 are cleaved as a signal peptide; sequence MFLSTLFLVSLATCVIC. Cys87 and Cys116 are disulfide-bonded. Ser221 serves as the catalytic Acyl-ester intermediate. Cys273 and Cys284 are joined by a disulfide. Catalysis depends on charge relay system residues Glu353 and His466. Positions 558 to 561 match the Prevents secretion from ER motif; sequence HNEL.

Belongs to the type-B carboxylesterase/lipase family. As to expression, expressed in liver, white and brown adipose tissue, kidney, intestine, adrenal, heart and ovary. Not detected in muscle, lung, testis, brain and spleen.

It localises to the lipid droplet. It is found in the cytoplasm. Its subcellular location is the cytosol. The protein localises to the endoplasmic reticulum. The protein resides in the microsome. It catalyses the reaction a carboxylic ester + H2O = an alcohol + a carboxylate + H(+). The enzyme catalyses all-trans-retinyl hexadecanoate + H2O = all-trans-retinol + hexadecanoate + H(+). In terms of biological role, involved in the detoxification of xenobiotics and in the activation of ester and amide prodrugs. Hydrolyzes retinyl esters. Hydrolyzes p-nitrophenyl butyrate (PNPB), triacylglycerol and monoacylglycerol. Shows higher activity against PNPB, a short-chain fatty acid ester, than against triolein, a long-chain fatty acid ester. Shows no detectable activity against diacylglycerol, cholesterol ester or phospholipids. May play a role in adipocyte lipolysis. The chain is Carboxylesterase 1F from Mus musculus (Mouse).